The sequence spans 453 residues: Bifunctional protein GlmU (453 aa).

Residues 1 to 225 form a pyrophosphorylase region; sequence MNIVILAAGT…GWETLGVNSK (225 aa). UDP-N-acetyl-alpha-D-glucosamine is bound by residues 6-9, Lys-20, Gln-71, 76-77, 98-100, Gly-135, Glu-150, Asn-165, and Asn-223; these read LAAG, GT, and YGD. Asp-100 contributes to the Mg(2+) binding site. Residue Asn-223 coordinates Mg(2+). The tract at residues 226–246 is linker; that stretch reads AQLAELERIHQRNLADALLAA. Residues 247 to 453 are N-acetyltransferase; the sequence is GVTLADPARI…GYVRPVKKKS (207 aa). Residues Arg-329 and Lys-347 each coordinate UDP-N-acetyl-alpha-D-glucosamine. Catalysis depends on His-359, which acts as the Proton acceptor. Residues Tyr-362 and Asn-373 each coordinate UDP-N-acetyl-alpha-D-glucosamine. Acetyl-CoA-binding positions include Ala-376, 382–383, Ser-401, and Ala-419; that span reads NY.

This sequence in the N-terminal section; belongs to the N-acetylglucosamine-1-phosphate uridyltransferase family. The protein in the C-terminal section; belongs to the transferase hexapeptide repeat family. As to quaternary structure, homotrimer. Mg(2+) is required as a cofactor.

The protein localises to the cytoplasm. The enzyme catalyses alpha-D-glucosamine 1-phosphate + acetyl-CoA = N-acetyl-alpha-D-glucosamine 1-phosphate + CoA + H(+). It carries out the reaction N-acetyl-alpha-D-glucosamine 1-phosphate + UTP + H(+) = UDP-N-acetyl-alpha-D-glucosamine + diphosphate. It participates in nucleotide-sugar biosynthesis; UDP-N-acetyl-alpha-D-glucosamine biosynthesis; N-acetyl-alpha-D-glucosamine 1-phosphate from alpha-D-glucosamine 6-phosphate (route II): step 2/2. The protein operates within nucleotide-sugar biosynthesis; UDP-N-acetyl-alpha-D-glucosamine biosynthesis; UDP-N-acetyl-alpha-D-glucosamine from N-acetyl-alpha-D-glucosamine 1-phosphate: step 1/1. It functions in the pathway bacterial outer membrane biogenesis; LPS lipid A biosynthesis. Functionally, catalyzes the last two sequential reactions in the de novo biosynthetic pathway for UDP-N-acetylglucosamine (UDP-GlcNAc). The C-terminal domain catalyzes the transfer of acetyl group from acetyl coenzyme A to glucosamine-1-phosphate (GlcN-1-P) to produce N-acetylglucosamine-1-phosphate (GlcNAc-1-P), which is converted into UDP-GlcNAc by the transfer of uridine 5-monophosphate (from uridine 5-triphosphate), a reaction catalyzed by the N-terminal domain. This chain is Bifunctional protein GlmU, found in Burkholderia pseudomallei (strain K96243).